Consider the following 132-residue polypeptide: Small ribosomal subunit protein uS8 (132 aa).

Belongs to the universal ribosomal protein uS8 family. As to quaternary structure, part of the 30S ribosomal subunit. Contacts proteins S5 and S12.

Functionally, one of the primary rRNA binding proteins, it binds directly to 16S rRNA central domain where it helps coordinate assembly of the platform of the 30S subunit. This chain is Small ribosomal subunit protein uS8, found in Psychrobacter cryohalolentis (strain ATCC BAA-1226 / DSM 17306 / VKM B-2378 / K5).